The primary structure comprises 672 residues: DNA-directed RNA polymerase subunit gamma (672 aa).

Zn(2+) contacts are provided by C70, C72, C85, and C88. Residues D466, D468, and D470 each coordinate Mg(2+).

Belongs to the RNA polymerase beta' chain family. RpoC1 subfamily. As to quaternary structure, in cyanobacteria the RNAP catalytic core is composed of 2 alpha, 1 beta, 1 beta', 1 gamma and 1 omega subunit. When a sigma factor is associated with the core the holoenzyme is formed, which can initiate transcription. Mg(2+) is required as a cofactor. Requires Zn(2+) as cofactor.

The catalysed reaction is RNA(n) + a ribonucleoside 5'-triphosphate = RNA(n+1) + diphosphate. In terms of biological role, DNA-dependent RNA polymerase catalyzes the transcription of DNA into RNA using the four ribonucleoside triphosphates as substrates. This is DNA-directed RNA polymerase subunit gamma from Trichodesmium erythraeum (strain IMS101).